We begin with the raw amino-acid sequence, 146 residues long: Anti-sigma F factor (146 aa).

The protein belongs to the anti-sigma-factor family.

The enzyme catalyses L-seryl-[protein] + ATP = O-phospho-L-seryl-[protein] + ADP + H(+). It catalyses the reaction L-threonyl-[protein] + ATP = O-phospho-L-threonyl-[protein] + ADP + H(+). Functionally, binds to sigma F and blocks its ability to form an RNA polymerase holoenzyme (E-sigma F). Phosphorylates SpoIIAA on a serine residue. This phosphorylation may enable SpoIIAA to act as an anti-anti-sigma factor that counteracts SpoIIAB and thus releases sigma F from inhibition. This Shouchella clausii (strain KSM-K16) (Alkalihalobacillus clausii) protein is Anti-sigma F factor.